A 164-amino-acid chain; its full sequence is HTH-type transcriptional regulator IscR (164 aa).

The 130-residue stretch at 2–131 (RLTSKGRYAV…NNITLGELVN (130 aa)) folds into the HTH rrf2-type domain. The H-T-H motif DNA-binding region spans 28 to 51 (LADISERQGISLSYLEQLFSRLRK). [2Fe-2S] cluster is bound by residues cysteine 92, cysteine 98, and cysteine 104.

[2Fe-2S] cluster serves as cofactor.

Its function is as follows. Regulates the transcription of several operons and genes involved in the biogenesis of Fe-S clusters and Fe-S-containing proteins. The polypeptide is HTH-type transcriptional regulator IscR (Salmonella agona (strain SL483)).